The following is a 354-amino-acid chain: Uroporphyrinogen decarboxylase (354 aa).

Substrate is bound by residues 27–31, Asp-77, Tyr-154, Ser-209, and His-327; that span reads RQAGR.

Belongs to the uroporphyrinogen decarboxylase family. As to quaternary structure, homodimer.

The protein localises to the cytoplasm. The catalysed reaction is uroporphyrinogen III + 4 H(+) = coproporphyrinogen III + 4 CO2. It functions in the pathway porphyrin-containing compound metabolism; protoporphyrin-IX biosynthesis; coproporphyrinogen-III from 5-aminolevulinate: step 4/4. Its function is as follows. Catalyzes the decarboxylation of four acetate groups of uroporphyrinogen-III to yield coproporphyrinogen-III. The chain is Uroporphyrinogen decarboxylase from Shewanella baltica (strain OS185).